Consider the following 675-residue polypeptide: Methionine--tRNA ligase (675 aa).

The 'HIGH' region motif lies at 15–25 (PYANGSIHLGH). Cys146, Cys149, Cys159, and Cys162 together coordinate Zn(2+). The 'KMSKS' region signature appears at 332 to 336 (KMSKS). Lys335 lines the ATP pocket. The 103-residue stretch at 573–675 (DFAKVDMRIA…SGAQPGMQVK (103 aa)) folds into the tRNA-binding domain.

This sequence belongs to the class-I aminoacyl-tRNA synthetase family. MetG type 1 subfamily. As to quaternary structure, homodimer. Zn(2+) serves as cofactor.

It localises to the cytoplasm. It catalyses the reaction tRNA(Met) + L-methionine + ATP = L-methionyl-tRNA(Met) + AMP + diphosphate. In terms of biological role, is required not only for elongation of protein synthesis but also for the initiation of all mRNA translation through initiator tRNA(fMet) aminoacylation. The protein is Methionine--tRNA ligase of Yersinia pseudotuberculosis serotype I (strain IP32953).